We begin with the raw amino-acid sequence, 224 residues long: Cerebellin-2 (224 aa).

An N-terminal signal peptide occupies residues 1 to 51; it reads MPAPGQGPRGPLLSMPGRRGALREPADFGSSLGAVLALLLLLLPACCPVRA. Asn-53 and Asn-110 each carry an N-linked (GlcNAc...) asparagine glycan. The C1q domain maps to 88–224; sequence SGSAKVAFSA…TFSGFLVFPL (137 aa).

Homohexamer; disulfide-linked homotrimers. The trimers are assembled via the globular C1q domains. The trimers associate via N-terminal cysteine residues to form disulfide-linked hexamers. May form homooligomers or heterooligomers with CBLN1 and CBLN3 prior to secretion. Once secreted, does not interact with other CBLN family members. Interacts with GRID2, and more weakly with GRID1. Interacts with NRXN1 and NRXN2 long and short isoforms produced by alternative promoter usage. Weakly interacts with NRXN3 short isoform and not at all with NRXN3 long isoform. Expressed in various brain regions with higher levels in the olfactory bulb, cerebral cortex, certain thalamic and hypothalamic nuclei, superior and inferior colliculi and some brainstem nuclei. Highly expressed in the dorsal medial habenula.

It localises to the secreted. Functionally, acts as a synaptic organizer in specific subsets of neurons in the brain. Essential for long-term maintenance but not establishment of excitatory synapses. Functions as part of a trans-synaptic complex by binding to postsynaptic GRID1 and presynaptic neurexins. This interaction helps regulate the activity of NMDA and AMPA receptors at hippocampal synapses without affecting synapse formation. NRXN1B-CBLN2-GRID1 complex transduce presynaptic signals into postsynaptic NMDAR response. NRXN3B-CBLN2-GRID1 complex transduce presynaptic signals into postsynaptic AMPAR response. This Mus musculus (Mouse) protein is Cerebellin-2 (Cbln2).